We begin with the raw amino-acid sequence, 318 residues long: Phospholipid scramblase 1 (318 aa).

A compositionally biased stretch (polar residues) spans 1-14 (MDKQNSQMNASHPE). The tract at residues 1–64 (MDKQNSQMNA…GPGPAGFPVP (64 aa)) is disordered. The proline-rich domain (PRD) stretch occupies residues 1–84 (MDKQNSQMNA…NQPVGAAGVP (84 aa)). Over 1 to 288 (MDKQNSQMNA…IQFPLDLDVK (288 aa)) the chain is Cytoplasmic. Residues 18–26 (PVGYPPQYP) carry the SH3-binding 1 motif. 2 consecutive short sequence motifs (PPXY motif) follow at residues 22 to 25 (PPQY) and 33 to 36 (PPGY). A compositionally biased stretch (low complexity) spans 31–44 (QGPPGYSGYPGPQV). The SH3-binding 2 signature appears at 42–50 (PQVSYPPPP). Phosphotyrosine; by ABL occurs at positions 69 and 74. The short motif at 84–92 (PWMPAPQPP) is the SH3-binding 3 element. An interaction with hepatitis C virus E2 glycoprotein region spans residues 99–290 (LEYLSQIDQI…FPLDLDVKMK (192 aa)). At Thr-161 the chain carries Phosphothreonine; by PKC/PRKCD. S-palmitoyl cysteine attachment occurs at residues Cys-184, Cys-185, Cys-186, Cys-188, and Cys-189. A Nuclear localization signal motif is present at residues 257–266 (GKISKHWTGI). The chain crosses the membrane as a helical span at residues 289–305 (MKAVMIGACFLIDFMFF). Topologically, residues 306–318 (ESTGSQEQKSGVW) are extracellular.

This sequence belongs to the phospholipid scramblase family. In terms of assembly, forms homooligomers in the presence of calcium. Interacts with ABL. Interacts with RELT, RELL1 and RELL2. Interacts with OXSR1 in the presence of RELT. Interacts with TOP2A and TOP2B. Interacts with OCLN. Interacts with TRPC5. Interacts with TRPC1 and TRPC4. Interacts with ILDR1. As to quaternary structure, (Microbial infection) Interacts with hepatitis C virus E1 and E2 glycoproteins. (Microbial infection) Interacts with T-cell leukemia virus (HTLV)-1 protein Tax (via N-terminus); this interaction represses Tax homodimerization. In terms of assembly, (Microbial infection) Interacts with HIV-1 protein Tat; this interaction represses the Tat-dependent transactivation of the HIV-1 long terminal repeat (LTR) and reduces the nuclear translocation of Tat. As to quaternary structure, (Microbial infection) Interacts with hepatitis B virus protein HBx; this interaction promotes the proteasomal degradation of HBx. (Microbial infection) Interacts with human cytomegalovirus proteins IE1 and IE2. In terms of assembly, (Microbial infection) Interacts with Epstein Barr virus (EBV) lytic switch protein BZLF1; this interaction negatively regulates the transcriptional regulatory activity of BZLF1 by preventing the formation of the BZLF1-CBP complex. As to quaternary structure, (Microbial infection) Interacts with influenza virus nucleoprotein NP. It depends on Ca(2+) as a cofactor. Requires Mg(2+) as cofactor. Zn(2+) serves as cofactor. Post-translationally, phosphorylation at Thr-161 by PKC/PKCD increases its phospholipid scramblase activity during both cell stimulation and apoptosis. Phosphorylated by OXSR1 in the presence of RELT. Palmitoylation is required for its phospholipid scramblase activity. Palmitoylation regulates its localization to the cell membrane or the nucleus; trafficking to the cell membrane is dependent upon palmitoylation whereas in the absence of palmitoylation, localizes to the nucleus. Expressed in platelets, erythrocyte membranes, lymphocytes, spleen, thymus, prostate, testis, uterus, intestine, colon, heart, placenta, lung, liver, kidney and pancreas. Not detected in brain and skeletal muscle.

It is found in the cell membrane. The protein localises to the nucleus. The protein resides in the cytoplasm. Its subcellular location is the perinuclear region. It carries out the reaction a 1,2-diacyl-sn-glycero-3-phosphocholine(in) = a 1,2-diacyl-sn-glycero-3-phosphocholine(out). The catalysed reaction is a 1,2-diacyl-sn-glycero-3-phosphoethanolamine(in) = a 1,2-diacyl-sn-glycero-3-phosphoethanolamine(out). The enzyme catalyses a 1,2-diacyl-sn-glycero-3-phospho-L-serine(in) = a 1,2-diacyl-sn-glycero-3-phospho-L-serine(out). Its activity is regulated as follows. Activated by Pb(2+) and Hg(2+) ions. Phosphorylation at Thr-161 by PKC/PKCD increases its phospholipid scramblase activity during both cell stimulation and apoptosis. Functionally, catalyzes calcium-induced ATP-independent rapid bidirectional and non-specific movement of phospholipids (lipid scrambling or lipid flip-flop) between the inner and outer leaflet of the plasma membrane resulting in collapse of the phospholipid asymmetry which leads to phosphatidylserine externalization on the cell surface. Mediates calcium-dependent phosphatidylserine externalization and apoptosis in neurons via its association with TRPC5. Also exhibits magnesium-dependent nuclease activity against double-stranded DNA and RNA but not single-stranded DNA and can enhance DNA decatenation mediated by TOP2A. Negatively regulates FcR-mediated phagocytosis in differentiated macrophages. May contribute to cytokine-regulated cell proliferation and differentiation. May play a role in the antiviral response of interferon (IFN) by amplifying and enhancing the IFN response through increased expression of select subset of potent antiviral genes. Inhibits the functions of viral transactivators, including human T-cell leukemia virus (HTLV)-1 protein Tax, human immunodeficiency virus (HIV)-1 Tat, human hepatitis B virus (HBV) HBx, Epstein-Barr virus (EBV) BZLF1 and human cytomegalovirus IE1 and IE2 proteins through direct interactions. Also mediates the inhibition of influenza virus infection by preventing nuclear import of the viral nucleoprotein/NP. Plays a crucial role as a defense factor against SARS-CoV-2 independently of its scramblase activity by directly targeting nascent viral vesicles to prevent virus-membrane fusion and the release of viral RNA into the host-cell cytosol. Its function is as follows. (Microbial infection) Acts as an attachment receptor for HCV. This is Phospholipid scramblase 1 (PLSCR1) from Homo sapiens (Human).